A 73-amino-acid polypeptide reads, in one-letter code: Sec-independent protein translocase protein TatA (73 aa).

The helical transmembrane segment at 1–21 (MGSFSIWHWMIVLVIVLLVFG) threads the bilayer.

This sequence belongs to the TatA/E family. As to quaternary structure, the Tat system comprises two distinct complexes: a TatABC complex, containing multiple copies of TatA, TatB and TatC subunits, and a separate TatA complex, containing only TatA subunits. Substrates initially bind to the TatABC complex, which probably triggers association of the separate TatA complex to form the active translocon.

It is found in the cell inner membrane. Functionally, part of the twin-arginine translocation (Tat) system that transports large folded proteins containing a characteristic twin-arginine motif in their signal peptide across membranes. TatA could form the protein-conducting channel of the Tat system. This is Sec-independent protein translocase protein TatA from Mesorhizobium japonicum (strain LMG 29417 / CECT 9101 / MAFF 303099) (Mesorhizobium loti (strain MAFF 303099)).